We begin with the raw amino-acid sequence, 305 residues long: Ribonuclease BN (305 aa).

Zn(2+) contacts are provided by His64, His66, Asp68, His69, His141, Asp212, and His270. Asp68 (proton acceptor) is an active-site residue.

The protein belongs to the RNase Z family. RNase BN subfamily. As to quaternary structure, homodimer. The cofactor is Zn(2+).

In terms of biological role, zinc phosphodiesterase, which has both exoribonuclease and endoribonuclease activities. In Escherichia coli O17:K52:H18 (strain UMN026 / ExPEC), this protein is Ribonuclease BN.